Consider the following 599-residue polypeptide: Peptidyl-Asp metalloendopeptidase (599 aa).

Residues 1–20 form the signal peptide; the sequence is MKKSLLCSTLALAVASAAQA. A Zn(2+)-binding site is contributed by histidine 164. The active site involves glutamate 165. The Zn(2+) site is built by histidine 168 and histidine 174. Residues 265-285 are disordered; that stretch reads PTKVPGTVNPGSGGDTPTPPD. The 126-residue stretch at 458-583 folds into the CBM-cenC domain; sequence YDFESGIGGW…KRAELMILSG (126 aa).

Belongs to the peptidase M72 family. In terms of assembly, interacts with BamI, the product of its coregulated adjacent gene, which inhibits its protease activity. Zn(2+) is required as a cofactor. In terms of processing, made as a membrane-associated pre-pro-protein, which is exported to the periplasm with removal of the signal peptide, leading to a protein with a molecular mass of 65 kDa, that likely contains the metzincin domain plus tandem carbohydrate-binding domains. Undergoes processing during export to the extracellular milieu, probably by autocatalysis, yielding a (mature length) 25 kDa protein that most likely corresponds to the metzincin domain only.

The protein resides in the secreted. The catalysed reaction is Cleavage of Xaa-|-Asp, Xaa-|-Glu and Xaa-|-cysteic acid bonds.. Its activity is regulated as follows. Is inhibited by BamI, the product of its coregulated adjacent gene. Functionally, metalloprotease with endopeptidase activity. Specifically cleaves on the N-terminal side of aspartyl, glutamyl and cysteic acid residues. Mep72 appears to be a secreted biofilm-specific regulator that affects the processing of a very specific subset of virulence factors exported by the type III secretion machinery as well as flagellar proteins. Binds directly to ExoS and PcrV and affects the processing of these proteins in the biofilm secretome, but contrary to expectation, Mep72 seems to protect these targets against proteolytic processing/degradation. The polypeptide is Peptidyl-Asp metalloendopeptidase (Pseudomonas aeruginosa (strain ATCC 15692 / DSM 22644 / CIP 104116 / JCM 14847 / LMG 12228 / 1C / PRS 101 / PAO1)).